The following is a 461-amino-acid chain: D-phenylhydantoinase (461 aa).

3 residues coordinate a divalent metal cation: His-59, His-61, and Lys-151. Lys-151 carries the N6-carboxylysine modification. Tyr-156 serves as a coordination point for substrate. Residues His-182 and His-239 each coordinate a divalent metal cation. Ser-286 lines the substrate pocket. A divalent metal cation is bound at residue Asp-313. Asn-335 is a binding site for substrate.

The protein belongs to the metallo-dependent hydrolases superfamily. Hydantoinase/dihydropyrimidinase family. As to quaternary structure, homotetramer. It depends on a divalent metal cation as a cofactor. Carboxylation allows a single lysine to coordinate two divalent metal cations.

It catalyses the reaction D-5-phenylhydantoin + H2O = N-carbamoyl-D-phenylglycine + H(+). In terms of biological role, catalyzes the stereospecific hydrolysis of the cyclic amide bond of D-hydantoin derivatives with an aromatic side chains at the 5'-position. Has no activity on dihydropyrimidines. The physiological function is unknown. The sequence is that of D-phenylhydantoinase from Escherichia coli O17:K52:H18 (strain UMN026 / ExPEC).